Reading from the N-terminus, the 244-residue chain is Acidic leucine-rich nuclear phosphoprotein 32 family member A (244 aa).

LRR repeat units lie at residues 18–41, 43–64, 65–87, and 89–110; these read DVKE…TDEF, GLEF…PKLN, KLKK…AEKC, and NLTH…EPLK. The 39-residue stretch at 123 to 161 folds into the LRRCT domain; it reads CEVTNLNDYRENLFKLLPQLTYLDGYDRDDKEAPDSDAE. The tract at residues 148–244 is disordered; sequence YDRDDKEAPD…DQDDEGEDDD (97 aa). Positions 157-227 are enriched in acidic residues; it reads DSDAEGYVEG…EEDEGDEEAE (71 aa).

It belongs to the ANP32 family. In terms of processing, phosphorylated on serine residues.

It is found in the nucleus. It localises to the cytoplasm. The protein localises to the endoplasmic reticulum. Its function is as follows. Implicated in a number of cellular processes, including proliferation, differentiation, caspase-dependent and caspase-independent apoptosis, suppression of transformation (tumor suppressor), inhibition of protein phosphatase 2A, regulation of mRNA trafficking and stability, and inhibition of acetyltransferases as part of the INHAT (inhibitor of histone acetyltransferases) complex. This chain is Acidic leucine-rich nuclear phosphoprotein 32 family member A (anp32a), found in Xenopus laevis (African clawed frog).